The primary structure comprises 65 residues: Large ribosomal subunit protein bL35 (65 aa).

It belongs to the bacterial ribosomal protein bL35 family.

The chain is Large ribosomal subunit protein bL35 from Chlorobium phaeovibrioides (strain DSM 265 / 1930) (Prosthecochloris vibrioformis (strain DSM 265)).